We begin with the raw amino-acid sequence, 363 residues long: Spermidine/putrescine import ATP-binding protein PotA (363 aa).

Positions 5–236 (IKLKHVRKEY…PVNDFVARFI (232 aa)) constitute an ABC transporter domain. Residue 38 to 45 (GPSGSGKT) participates in ATP binding.

The protein belongs to the ABC transporter superfamily. Spermidine/putrescine importer (TC 3.A.1.11.1) family. The complex is composed of two ATP-binding proteins (PotA), two transmembrane proteins (PotB and PotC) and a solute-binding protein (PotD).

The protein localises to the cell membrane. The enzyme catalyses ATP + H2O + polyamine-[polyamine-binding protein]Side 1 = ADP + phosphate + polyamineSide 2 + [polyamine-binding protein]Side 1.. Part of the ABC transporter complex PotABCD involved in spermidine/putrescine import. Responsible for energy coupling to the transport system. This Lactobacillus johnsonii (strain CNCM I-12250 / La1 / NCC 533) protein is Spermidine/putrescine import ATP-binding protein PotA.